We begin with the raw amino-acid sequence, 290 residues long: Uridine diphosphate glucose pyrophosphatase NUDT22 (290 aa).

Residues F56, Y87, R139, A144, D151, H156, and E158 each contribute to the substrate site. Residues 118–285 (ADPLGVGAAL…KGAIFLYNRV (168 aa)) form the Nudix hydrolase domain. The Nudix box signature appears at 175–196 (GELVVHELFSSVLQEICDEVNV). Mg(2+) contacts are provided by E189 and E193. A substrate-binding site is contributed by S274.

Belongs to the Nudix family. Mg(2+) serves as cofactor.

It carries out the reaction UDP-sugar + H2O = UMP + alpha-D-aldose 1-phosphate.. Functionally, hydrolyzes UDP-glucose to glucose 1-phosphate and UMP and UDP-galactose to galactose 1-phosphate and UMP. Preferred substrate is UDP-glucose. In Bos taurus (Bovine), this protein is Uridine diphosphate glucose pyrophosphatase NUDT22 (NUDT22).